The following is a 136-amino-acid chain: Small ribosomal subunit protein uS9 (136 aa).

This sequence belongs to the universal ribosomal protein uS9 family.

This is Small ribosomal subunit protein uS9 from Borrelia turicatae (strain 91E135).